A 376-amino-acid chain; its full sequence is uncharacterized protein (376 aa).

Ser-59 bears the Phosphoserine mark. Residues 139 to 367 (VAIEITVQRQ…CLIEHHNAIF (229 aa)) form the Rho-GAP domain. A disordered region spans residues 307 to 338 (RPSRSPKKSNDFETATPWDLLSDEGEGPDASS).

This is an uncharacterized protein from Arabidopsis thaliana (Mouse-ear cress).